The primary structure comprises 454 residues: Serine--tRNA ligase (454 aa).

L-serine is bound at residue 247-249 (TAE). ATP is bound by residues 278 to 280 (RKE) and Val-294. Residue Glu-301 participates in L-serine binding. 365-368 (ELAS) contacts ATP. Thr-400 lines the L-serine pocket.

It belongs to the class-II aminoacyl-tRNA synthetase family. Type-1 seryl-tRNA synthetase subfamily. Homodimer. The tRNA molecule binds across the dimer.

The protein localises to the cytoplasm. It carries out the reaction tRNA(Ser) + L-serine + ATP = L-seryl-tRNA(Ser) + AMP + diphosphate + H(+). The catalysed reaction is tRNA(Sec) + L-serine + ATP = L-seryl-tRNA(Sec) + AMP + diphosphate + H(+). The protein operates within aminoacyl-tRNA biosynthesis; selenocysteinyl-tRNA(Sec) biosynthesis; L-seryl-tRNA(Sec) from L-serine and tRNA(Sec): step 1/1. Catalyzes the attachment of serine to tRNA(Ser). Is also able to aminoacylate tRNA(Sec) with serine, to form the misacylated tRNA L-seryl-tRNA(Sec), which will be further converted into selenocysteinyl-tRNA(Sec). The sequence is that of Serine--tRNA ligase from Pyrobaculum calidifontis (strain DSM 21063 / JCM 11548 / VA1).